The chain runs to 317 residues: MSLMSIRLKLSSLLMGIAIFAIGFGIIYAILYYIGLNIGAIALLMVLLPIFIIMDIVQWLFGPYMIGAVYRTHKLQPTEPEYNMLTSIVSEVARNNNIRMPEVYIAEVDMPNAFAYGSPIAGRRIAVTRGLLRILEPDEIKAVIGHEMGHLRHRDVEMLLAIGLIPTLIFYFGYTLLFSGERGRNAGGIVLLAIIAMAASFLFRFLILAFNRMRESYADVNSALTVDGGAEKLQTALAKIVAATGRTGRYTRRRRNTPSSSVTEMLFFSNPNQSANEDYRKLLEEWKTAKVSLFADFFSDHPHPAKRIQRLEKLKMS.

The next 2 membrane-spanning stretches (helical) occupy residues 14-34 (LMGI…LYYI) and 41-61 (IALL…QWLF). Position 146 (His146) interacts with Zn(2+). Glu147 is a catalytic residue. His150 lines the Zn(2+) pocket. Helical transmembrane passes span 158-178 (MLLA…TLLF) and 189-209 (IVLL…LILA). Residue Glu215 coordinates Zn(2+).

This sequence belongs to the peptidase M48B family. The cofactor is Zn(2+).

The protein resides in the cell membrane. The sequence is that of Protease HtpX homolog from Thermoplasma acidophilum (strain ATCC 25905 / DSM 1728 / JCM 9062 / NBRC 15155 / AMRC-C165).